The sequence spans 201 residues: ATP-dependent Clp protease proteolytic subunit 2 (201 aa).

Ser98 serves as the catalytic Nucleophile. Residue His123 is part of the active site.

It belongs to the peptidase S14 family. As to quaternary structure, fourteen ClpP subunits assemble into 2 heptameric rings which stack back to back to give a disk-like structure with a central cavity, resembling the structure of eukaryotic proteasomes.

It is found in the cytoplasm. It carries out the reaction Hydrolysis of proteins to small peptides in the presence of ATP and magnesium. alpha-casein is the usual test substrate. In the absence of ATP, only oligopeptides shorter than five residues are hydrolyzed (such as succinyl-Leu-Tyr-|-NHMec, and Leu-Tyr-Leu-|-Tyr-Trp, in which cleavage of the -Tyr-|-Leu- and -Tyr-|-Trp bonds also occurs).. Functionally, cleaves peptides in various proteins in a process that requires ATP hydrolysis. Has a chymotrypsin-like activity. Plays a major role in the degradation of misfolded proteins. This is ATP-dependent Clp protease proteolytic subunit 2 from Pseudomonas aeruginosa (strain ATCC 15692 / DSM 22644 / CIP 104116 / JCM 14847 / LMG 12228 / 1C / PRS 101 / PAO1).